Consider the following 310-residue polypeptide: Sporozoite surface protein P36 (310 aa).

The signal sequence occupies residues 1 to 24; the sequence is MRKALYSLLFYMCICLYIYTPVFM. 6-Cys domains lie at 25–157 and 168–309; these read ANLK…IKKT and YIKG…STKA. Intrachain disulfides connect Cys38-Cys48, Cys62-Cys137, Cys80-Cys135, Cys172-Cys196, Cys210-Cys291, and Cys227-Cys289. Asn72, Asn114, and Asn118 each carry an N-linked (GlcNAc...) asparagine glycan. An N-linked (GlcNAc...) asparagine glycan is attached at Asn290.

The protein resides in the cell surface. It localises to the cell membrane. Involved in sporozoite infection of hepatocytes and replication therein. The sequence is that of Sporozoite surface protein P36 (P36) from Plasmodium yoelii yoelii.